The primary structure comprises 196 residues: MRNPIHKRLENLESWQHLTFMAALCERMAPNFKLFCQMNELSAETKTYQNILNLVWEYLTVKDVKINFENQLEKLETIIPDVNDYDSFGVVPALDACQALAEILHAIIAGETLEKAVEISLISLGTIRVLLETETGRDWSESKLKENEDIQTELDVQWQVYRLLKECEKRDIELILALKNEIRTEGISNIGIEFHQ.

To E.coli YjaG.

This is an uncharacterized protein from Haemophilus influenzae (strain ATCC 51907 / DSM 11121 / KW20 / Rd).